Here is a 345-residue protein sequence, read N- to C-terminus: Olfactory receptor 11G2 (345 aa).

At 1 to 62 (MHFLSQNDLN…LGFPCPREGQ (62 aa)) the chain is on the extracellular side. N-linked (GlcNAc...) asparagine glycosylation is present at asparagine 43. A helical transmembrane segment spans residues 63–83 (ILLFVLFTVVYLLTLMGNGSI). Topologically, residues 84–92 (ICAVHWDQR) are cytoplasmic. Residues 93 to 113 (LHAPMYILLANFSFLEICYVT) form a helical membrane-spanning segment. Residues 114 to 135 (STVPSMLANFLSDTKIISFSGC) are Extracellular-facing. A disulfide bridge links cysteine 135 with cysteine 217. A helical transmembrane segment spans residues 136–156 (FLQFYFFFSLGSTECFFLAVM). The Cytoplasmic portion of the chain corresponds to 157–181 (AFDRYLAICRPLRYPTIMTRRLCTN). A helical membrane pass occupies residues 182 to 202 (LVVNCWVLGFIWFLIPIVNIS). Residues 203–241 (QMSFCGSRIIDHFLCDPAPLLTLTCKKGPVIELVFSVLS) lie on the Extracellular side of the membrane. A helical membrane pass occupies residues 242-264 (PLPVFMLFLFIVGSYALVVRAVL). Residues 265 to 275 (RVPSAAGRRKA) are Cytoplasmic-facing. A helical membrane pass occupies residues 276–296 (FSTCGSHLAVVSLFYGSVLVM). Over 297-309 (YGSPPSKNEAGKQ) the chain is Extracellular. A helical transmembrane segment spans residues 310-330 (KTVTLFYSVVTPLLNPVIYSL). Over 331 to 345 (RNKDMRKALKKFWGT) the chain is Cytoplasmic.

The protein belongs to the G-protein coupled receptor 1 family.

It is found in the cell membrane. Its function is as follows. Odorant receptor. In Homo sapiens (Human), this protein is Olfactory receptor 11G2 (OR11G2).